Reading from the N-terminus, the 316-residue chain is Retinol dehydrogenase 12 (316 aa).

Glycine 46–glycine 52 provides a ligand contact to NADP(+). Serine 175 lines the substrate pocket. The Proton acceptor role is filled by tyrosine 200.

This sequence belongs to the short-chain dehydrogenases/reductases (SDR) family. As to expression, expressed in the inner segments of the photoreceptor in retina.

It carries out the reaction all-trans-retinol + NADP(+) = all-trans-retinal + NADPH + H(+). The enzyme catalyses 11-cis-retinol + NADP(+) = 11-cis-retinal + NADPH + H(+). The catalysed reaction is 9-cis-retinol + NADP(+) = 9-cis-retinal + NADPH + H(+). It catalyses the reaction a 4-hydroxynonen-1-ol + NADP(+) = a 4-hydroxynonenal + NADPH + H(+). It carries out the reaction (E)-non-2-en-1-ol + NADP(+) = (E)-non-2-enal + NADPH + H(+). The enzyme catalyses (Z)-non-6-en-1-ol + NADP(+) = (Z)-non-6-enal + NADPH + H(+). The catalysed reaction is nonan-1-ol + NADP(+) = nonanal + NADPH + H(+). It functions in the pathway cofactor metabolism; retinol metabolism. Functionally, retinoids dehydrogenase/reductase with a clear preference for NADP. Displays high activity towards 9-cis, 11-cis and all-trans-retinal. Shows very weak activity toward 13-cis-retinol. Also exhibits activity, albeit with lower affinity than for retinaldehydes, towards lipid peroxidation products (C9 aldehydes) such as 4-hydroxynonenal and trans-2-nonenal. Plays an important function in photoreceptor cells to detoxify 4-hydroxynonenal and potentially other toxic aldehyde products resulting from lipid peroxidation. Has no dehydrogenase activity towards steroids. The polypeptide is Retinol dehydrogenase 12 (Rdh12) (Mus musculus (Mouse)).